We begin with the raw amino-acid sequence, 399 residues long: Enoyl-[acyl-carrier-protein] reductase [NADH] 2 (399 aa).

NAD(+) contacts are provided by residues 48–53 (GASSGF), 75–76 (FE), 112–113 (DA), and 141–142 (LA). Substrate is bound at residue tyrosine 227. Tyrosine 237 acts as the Proton donor in catalysis. NAD(+) contacts are provided by residues lysine 246 and 275-277 (LVT).

It belongs to the TER reductase family. As to quaternary structure, monomer.

The catalysed reaction is a 2,3-saturated acyl-[ACP] + NAD(+) = a (2E)-enoyl-[ACP] + NADH + H(+). It participates in lipid metabolism; fatty acid biosynthesis. In terms of biological role, involved in the final reduction of the elongation cycle of fatty acid synthesis (FAS II). Catalyzes the reduction of a carbon-carbon double bond in an enoyl moiety that is covalently linked to an acyl carrier protein (ACP). This is Enoyl-[acyl-carrier-protein] reductase [NADH] 2 from Vibrio parahaemolyticus serotype O3:K6 (strain RIMD 2210633).